The chain runs to 354 residues: Guanine nucleotide-binding protein alpha-16 subunit (354 aa).

Gly-2 carries the N-myristoyl glycine lipid modification. A lipid anchor (S-palmitoyl cysteine) is attached at Cys-3. Positions 31-354 (KTVKLLLLGA…RDNLRTCGLY (324 aa)) constitute a G-alpha domain. A G1 motif region spans residues 34–47 (KLLLLGAGESGKST). GTP contacts are provided by residues 39 to 46 (GAGESGKS), 174 to 180 (LRTRIKT), 199 to 203 (DVGGQ), 268 to 271 (NKKD), and Ala-326. Ser-46 and Thr-180 together coordinate Mg(2+). The interval 172-180 (DVLRTRIKT) is G2 motif. The G3 motif stretch occupies residues 195–204 (FVVFDVGGQR). The interval 264–271 (ILFLNKKD) is G4 motif. Residues 324-329 (TCATDT) form a G5 motif region.

This sequence belongs to the G-alpha family. As to quaternary structure, g proteins are composed of 3 units; alpha, beta and gamma. The alpha chain contains the guanine nucleotide binding site.

Its function is as follows. Guanine nucleotide-binding proteins (G proteins) are involved as modulators or transducers in various transmembrane signaling systems. In the 1-cell embryo, probably together with goa-1, controls nuclear rotation and spindle elongation during mitosis. During the first embryonic cell divisons, plays a role in gpr-1/2 cortical localization and in the proper orientation of EMS blastomere mitotic spindle. This chain is Guanine nucleotide-binding protein alpha-16 subunit (gpa-16), found in Caenorhabditis briggsae.